Reading from the N-terminus, the 530-residue chain is Retinoic acid-induced protein 2 (530 aa).

Polar residues predominate over residues 1–13 (MDDLQSQNLSMDM). The segment at 1 to 22 (MDDLQSQNLSMDMTDSPPALAN) is disordered.

In Homo sapiens (Human), this protein is Retinoic acid-induced protein 2 (RAI2).